We begin with the raw amino-acid sequence, 226 residues long: 2-C-methyl-D-erythritol 4-phosphate cytidylyltransferase (226 aa).

It belongs to the IspD/TarI cytidylyltransferase family. IspD subfamily.

It catalyses the reaction 2-C-methyl-D-erythritol 4-phosphate + CTP + H(+) = 4-CDP-2-C-methyl-D-erythritol + diphosphate. It functions in the pathway isoprenoid biosynthesis; isopentenyl diphosphate biosynthesis via DXP pathway; isopentenyl diphosphate from 1-deoxy-D-xylulose 5-phosphate: step 2/6. Functionally, catalyzes the formation of 4-diphosphocytidyl-2-C-methyl-D-erythritol from CTP and 2-C-methyl-D-erythritol 4-phosphate (MEP). In Bacillus cereus (strain ATCC 14579 / DSM 31 / CCUG 7414 / JCM 2152 / NBRC 15305 / NCIMB 9373 / NCTC 2599 / NRRL B-3711), this protein is 2-C-methyl-D-erythritol 4-phosphate cytidylyltransferase.